An 849-amino-acid chain; its full sequence is MPPTLALLLFLALSAVAAVGGAGDVRRVLHEPLFPIEWTPPPSTASPSPPSPDFSSDPSTPATPVDNGGPALLPPPPPNTVAADVSSSRSGPDPRARGGGGGGTPKAAIVVASAAAAAVLALLAFAAAFLLTGRLARHPAAAAAQAHKPPGHAHAGAGSVAGAHADVAGCSTAVSPYRKVRPERARRGMCRDVDTVPSPELRPLPPLRRGASALTQGSSDEDAAYYTPGQRSAGSGGGGGGEGGGTWSEASASSPRTTTASRRSLPSLTSDFFPTTPAAAPVPAPAAAAPPPAPPAPRSRRTPPRTRFSAGSGAEMNKQMASPPSNPPPAPPPPPPPPSRFNNTTPKPPPPPPPPEPPTGPVSARRLLRPLPAEGPSIVIPRAPAMAVTKDNDATAATMSVRTRGEAAGDEPRPKLKPLHWDKVRTSSDRDMVWDRLKLDEDMIEVLFMNNSTAVAPRMDNPKKVGMPQFKQEERVLDPKKAQNIAILLRALNVTLEEVTDALLDGNAECLGAELLETLVKMAPTKEEELKLRDFTGDLSKLGSAERFLKAVLDIPFAFKRVDVMLYRANFENEVNYLRKSFQTLEAACDDLKGSRLFLKLLEAVLRTGNRMNVGTNRGEAKAFKLDTLLKLADVKGADGKTTLLHFVVQEIVRSEDAKSEKAPENHITNIAKVEQLRRQGLKVVSGLSTELGNVKRAATMDFDVLHGYVSKLEAGLGKIKSVLQLEKQCSQGVNFFATMREFLKEAEQEIEQVRHDEKAALGRVKEITEYFHGNAVKEEAHPLRIFMVVRDFLSMLDHVCREVSQQDRTFVGSARSFRISAANALPILNMQGQKGGRESSSDGDSPSM.

The signal sequence occupies residues 1–22 (MPPTLALLLFLALSAVAAVGGA). The disordered stretch occupies residues 36–104 (IEWTPPPSTA…RARGGGGGGT (69 aa)). Residues 38 to 52 (WTPPPSTASPSPPSP) are compositionally biased toward pro residues. Residues 53 to 64 (DFSSDPSTPATP) are compositionally biased toward low complexity. Residues 109-129 (IVVASAAAAAVLALLAFAAAF) traverse the membrane as a helical segment. A compositionally biased stretch (basic and acidic residues) spans 185-194 (ARRGMCRDVD). The interval 185 to 364 (ARRGMCRDVD…PEPPTGPVSA (180 aa)) is disordered. A compositionally biased stretch (gly residues) spans 234 to 246 (GSGGGGGGEGGGT). A compositionally biased stretch (low complexity) spans 247–279 (WSEASASSPRTTTASRRSLPSLTSDFFPTTPAA). Composition is skewed to pro residues over residues 280–297 (APVP…PPAP), 324–339 (PSNP…PPPS), and 346–360 (PKPP…PPTG). Residues 406-823 (EAAGDEPRPK…SARSFRISAA (418 aa)) form the FH2 domain.

It belongs to the formin-like family. Class-I subfamily.

Its subcellular location is the membrane. This chain is Formin-like protein 4 (FH4), found in Oryza sativa subsp. japonica (Rice).